Consider the following 174-residue polypeptide: Adipose-secreted signaling protein (174 aa).

Position 2 is an N-acetylalanine (alanine 2). Threonine 147 bears the Phosphothreonine mark.

This sequence belongs to the ADISSP family.

It localises to the secreted. In terms of biological role, adipocyte-secreted protein (adipokine) that acts as a key regulator for white adipose tissue (WAT) thermogenesis and glucose homeostasis at least in part through activation of protein kinase A (PKA). The chain is Adipose-secreted signaling protein from Bos taurus (Bovine).